The primary structure comprises 799 residues: Zinc finger X-linked protein ZXDA (799 aa).

Positions 1 to 89 (MEIPKLLPAR…QPSGGGDDFF (89 aa)) are disordered. Gly residues predominate over residues 13–26 (LQGGGGGGIPAGGG). 10 consecutive C2H2-type zinc fingers follow at residues 267–291 (YLCP…LLTH), 300–324 (FKCP…LQSH), 330–354 (FGCP…MKGH), 360–382 (FKCE…QRSH), 389–413 (YQCA…NRAH), 420–444 (FSCS…LRSH), 450–474 (FLCD…KRKH), 480–504 (FMCP…SITH), 510–534 (FVCP…SKKH), and 543–568 (SRCP…VKRH). The interval 267 to 573 (YLCPEALCGQ…MVKRHKVGQD (307 aa)) is required for interaction with ZXDC. Positions 572–699 (QDLLAQLEAA…NMDEVSSVSV (128 aa)) are required for transcriptional activation.

It belongs to the ZXD family. Self-associates. Interacts with ZXDC and CIITA. In terms of tissue distribution, may be expressed in brain, heart, kidney, liver, lung, muscle and placenta.

Its subcellular location is the nucleus. Cooperates with CIITA to promote transcription of MHC class I and MHC class II genes. This chain is Zinc finger X-linked protein ZXDA (ZXDA), found in Homo sapiens (Human).